The primary structure comprises 87 residues: Small ribosomal subunit protein uS15c (87 aa).

The segment at 1-20 (MNQNLSIRKRNKLKQDSGSP) is disordered.

It belongs to the universal ribosomal protein uS15 family. Part of the 30S ribosomal subunit.

It is found in the plastid. The protein resides in the chloroplast. The chain is Small ribosomal subunit protein uS15c (rps15) from Zygnema circumcarinatum (Green alga).